A 172-amino-acid chain; its full sequence is Signal peptidase complex catalytic subunit SEC11 (172 aa).

The Cytoplasmic portion of the chain corresponds to 1–14 (MLSSLGNPRQAAAQ). A helical; Signal-anchor for type II membrane protein transmembrane segment spans residues 15–35 (LMNFALILSTAFMMWKGLSVI). The Lumenal portion of the chain corresponds to 36 to 172 (TDSPSPIVVV…MGLLVVLQRE (137 aa)). Residues Ser49 and His90 each act as charge relay system in the active site. N-linked (GlcNAc...) asparagine glycosylation is present at Asn111. The active-site Charge relay system is the Asp115. The tract at residues 158–169 (VMLGIMGLLVVL) is C-terminal short (CTS) helix.

The protein belongs to the peptidase S26B family. Component of the signal peptidase complex (SPC) composed of a catalytic subunit SEC11 and three accessory subunits SPC1, SPC2 and SPC3. The complex induces a local thinning of the ER membrane which is used to measure the length of the signal peptide (SP) h-region of protein substrates. This ensures the selectivity of the complex towards h-regions shorter than 18-20 amino acids. SPC associates with the translocon complex.

The protein resides in the endoplasmic reticulum membrane. The enzyme catalyses Cleavage of hydrophobic, N-terminal signal or leader sequences from secreted and periplasmic proteins.. Its function is as follows. Catalytic component of the signal peptidase complex (SPC) which catalyzes the cleavage of N-terminal signal sequences from nascent proteins as they are translocated into the lumen of the endoplasmic reticulum. Specifically cleaves N-terminal signal peptides that contain a hydrophobic alpha-helix (h-region) shorter than 18-20 amino acids. In Fusarium vanettenii (strain ATCC MYA-4622 / CBS 123669 / FGSC 9596 / NRRL 45880 / 77-13-4) (Fusarium solani subsp. pisi), this protein is Signal peptidase complex catalytic subunit SEC11 (SEC11).